The primary structure comprises 83 residues: Defensin-like protein 47 (83 aa).

A signal peptide spans 1–27 (MGSTKTLVTCFLVIILAVSLPNNNVLA). 4 cysteine pairs are disulfide-bonded: C40-C81, C44-C68, C53-C79, and C57-C80.

The protein belongs to the DEFL family.

The protein resides in the secreted. This is Defensin-like protein 47 from Arabidopsis thaliana (Mouse-ear cress).